Reading from the N-terminus, the 397-residue chain is 1-deoxy-D-xylulose 5-phosphate reductoisomerase (397 aa).

NADPH-binding residues include T12, G13, S14, I15, G38, K39, N40, and N126. K127 contributes to the 1-deoxy-D-xylulose 5-phosphate binding site. E128 is an NADPH binding site. Residue D152 coordinates Mn(2+). Residues S153, E154, S188, and H211 each coordinate 1-deoxy-D-xylulose 5-phosphate. E154 provides a ligand contact to Mn(2+). An NADPH-binding site is contributed by G217. 1-deoxy-D-xylulose 5-phosphate is bound by residues S224, N229, K230, and E233. E233 is a binding site for Mn(2+).

Belongs to the DXR family. Requires Mg(2+) as cofactor. Mn(2+) serves as cofactor.

It catalyses the reaction 2-C-methyl-D-erythritol 4-phosphate + NADP(+) = 1-deoxy-D-xylulose 5-phosphate + NADPH + H(+). It participates in isoprenoid biosynthesis; isopentenyl diphosphate biosynthesis via DXP pathway; isopentenyl diphosphate from 1-deoxy-D-xylulose 5-phosphate: step 1/6. Its function is as follows. Catalyzes the NADPH-dependent rearrangement and reduction of 1-deoxy-D-xylulose-5-phosphate (DXP) to 2-C-methyl-D-erythritol 4-phosphate (MEP). The chain is 1-deoxy-D-xylulose 5-phosphate reductoisomerase from Haemophilus influenzae (strain PittGG).